A 560-amino-acid polypeptide reads, in one-letter code: Serine palmitoyltransferase 2 (560 aa).

The helical transmembrane segment at 65–85 (PMLVAVLTYVGYGVLTLFGYL) threads the bilayer. The residue at position 377 (lysine 377) is an N6-(pyridoxal phosphate)lysine.

The protein belongs to the class-II pyridoxal-phosphate-dependent aminotransferase family. Component of the serine palmitoyltransferase (SPT) complex, which is composed of SPTLC1, SPTLC2 or SPTLC3 and SPTSSA or SPTSSB. The heterodimer consisting of SPTLC1 and SPTLC2/SPTLC3 forms the catalytic core of the enzyme, while SPTSSA or SPTSSB subunits determine substrate specificity. SPT also interacts with ORMDL proteins, especially ORMDL3, which negatively regulate SPT activity in the presence of ceramides. Forms dimers of heterodimers with SPTLC1. Pyridoxal 5'-phosphate is required as a cofactor. In terms of tissue distribution, expressed in astrocytes.

The protein resides in the endoplasmic reticulum membrane. The enzyme catalyses L-serine + hexadecanoyl-CoA + H(+) = 3-oxosphinganine + CO2 + CoA. It carries out the reaction octadecanoyl-CoA + L-serine + H(+) = 3-oxoeicosasphinganine + CO2 + CoA. It functions in the pathway lipid metabolism; sphingolipid metabolism. Its activity is regulated as follows. SPT complex catalytic activity is negatively regulated by ORMDL proteins, including ORMDL3, in the presence of ceramides. This mechanism allows to maintain ceramide levels at sufficient concentrations for the production of complex sphingolipids, but which prevents the accumulation of ceramides to levels that trigger apoptosis. In terms of biological role, component of the serine palmitoyltransferase multisubunit enzyme (SPT) that catalyzes the initial and rate-limiting step in sphingolipid biosynthesis by condensing L-serine and activated acyl-CoA (most commonly palmitoyl-CoA) to form long-chain bases. The SPT complex is composed of SPTLC1, SPTLC2 or SPTLC3 and SPTSSA or SPTSSB. Within this complex, the heterodimer consisting of SPTLC1 and SPTLC2/SPTLC3 forms the catalytic core. The composition of the serine palmitoyltransferase (SPT) complex determines the substrate preference. The SPTLC1-SPTLC2-SPTSSA complex shows a strong preference for C16-CoA substrate, while the SPTLC1-SPTLC3-SPTSSA isozyme uses both C14-CoA and C16-CoA as substrates, with a slight preference for C14-CoA. The SPTLC1-SPTLC2-SPTSSB complex shows a strong preference for C18-CoA substrate, while the SPTLC1-SPTLC3-SPTSSB isozyme displays an ability to use a broader range of acyl-CoAs, without apparent preference. Crucial for adipogenesis. The sequence is that of Serine palmitoyltransferase 2 from Rattus norvegicus (Rat).